A 615-amino-acid chain; its full sequence is Proteasome-associated ATPase (615 aa).

Residues 1–27 (MSESERSEASEVFGTSPDSRLSSEDAA) form a disordered region. Residues 22–99 (SSEDAAELEQ…LREEVDRLGQ (78 aa)) adopt a coiled-coil conformation. Residue 302–307 (GCGKTL) participates in ATP binding. Residues 614–615 (YL) are docks into pockets in the proteasome alpha-ring.

It belongs to the AAA ATPase family. As to quaternary structure, homohexamer. Assembles into a hexameric ring structure that caps the 20S proteasome core. Strongly interacts with the prokaryotic ubiquitin-like protein Pup through a hydrophobic interface; the interacting region of ARC lies in its N-terminal coiled-coil domain. There is one Pup binding site per ARC hexamer ring. Upon ATP-binding, the C-terminus of ARC interacts with the alpha-rings of the proteasome core, possibly by binding to the intersubunit pockets.

The protein operates within protein degradation; proteasomal Pup-dependent pathway. Its function is as follows. ATPase which is responsible for recognizing, binding, unfolding and translocation of pupylated proteins into the bacterial 20S proteasome core particle. May be essential for opening the gate of the 20S proteasome via an interaction with its C-terminus, thereby allowing substrate entry and access to the site of proteolysis. Thus, the C-termini of the proteasomal ATPase may function like a 'key in a lock' to induce gate opening and therefore regulate proteolysis. This is Proteasome-associated ATPase from Mycolicibacterium vanbaalenii (strain DSM 7251 / JCM 13017 / BCRC 16820 / KCTC 9966 / NRRL B-24157 / PYR-1) (Mycobacterium vanbaalenii).